Here is a 133-residue protein sequence, read N- to C-terminus: Type III secretion protein HrcQb (133 aa).

Over residues 1-21 (MSTEDLYQDDVEMLDDYEEPV) the composition is skewed to acidic residues. The interval 1–60 (MSTEDLYQDDVEMLDDYEEPVPEQADQQQRDDEYAEHAFGYADSDAEHEEQSGDHHESPM) is disordered. The span at 49 to 59 (EEQSGDHHESP) shows a compositional bias: basic and acidic residues.

The protein belongs to the FliN/MopA/SpaO family. Homotetramer. The four monomers assemble into two tightly bound homodimers. Interacts with HrcQa.

It is found in the cytoplasm. Component of the type III secretion system, which is required for effector protein delivery, parasitism, and pathogenicity. Probably participates in the formation of a C-ring-like assembly along with HrcQa. The chain is Type III secretion protein HrcQb (hrcQb) from Pseudomonas syringae pv. syringae.